A 420-amino-acid polypeptide reads, in one-letter code: UDP-N-acetylglucosamine 1-carboxyvinyltransferase (420 aa).

A phosphoenolpyruvate-binding site is contributed by 22 to 23 (KN). UDP-N-acetyl-alpha-D-glucosamine is bound at residue Arg94. Cys118 functions as the Proton donor in the catalytic mechanism. Position 118 is a 2-(S-cysteinyl)pyruvic acid O-phosphothioketal (Cys118). Residues Asp306 and Ile328 each coordinate UDP-N-acetyl-alpha-D-glucosamine.

The protein belongs to the EPSP synthase family. MurA subfamily.

The protein localises to the cytoplasm. The catalysed reaction is phosphoenolpyruvate + UDP-N-acetyl-alpha-D-glucosamine = UDP-N-acetyl-3-O-(1-carboxyvinyl)-alpha-D-glucosamine + phosphate. It participates in cell wall biogenesis; peptidoglycan biosynthesis. Its function is as follows. Cell wall formation. Adds enolpyruvyl to UDP-N-acetylglucosamine. This chain is UDP-N-acetylglucosamine 1-carboxyvinyltransferase, found in Jannaschia sp. (strain CCS1).